Reading from the N-terminus, the 431-residue chain is Gamma-glutamyl phosphate reductase (431 aa).

Belongs to the gamma-glutamyl phosphate reductase family.

Its subcellular location is the cytoplasm. The catalysed reaction is L-glutamate 5-semialdehyde + phosphate + NADP(+) = L-glutamyl 5-phosphate + NADPH + H(+). It participates in amino-acid biosynthesis; L-proline biosynthesis; L-glutamate 5-semialdehyde from L-glutamate: step 2/2. Functionally, catalyzes the NADPH-dependent reduction of L-glutamate 5-phosphate into L-glutamate 5-semialdehyde and phosphate. The product spontaneously undergoes cyclization to form 1-pyrroline-5-carboxylate. The polypeptide is Gamma-glutamyl phosphate reductase (Methylobacterium nodulans (strain LMG 21967 / CNCM I-2342 / ORS 2060)).